The primary structure comprises 333 residues: Aquaporin-1 (333 aa).

A disordered region spans residues Met-1–Arg-26. 2 helical membrane-spanning segments follow: residues Leu-85–Gly-105 and Phe-116–Ile-136. The short motif at Asn-137–Ala-139 is the NPA 1 element. Transmembrane regions (helical) follow at residues Leu-156 to Ile-176, Thr-213 to Ile-233, and Leu-245 to Ala-265. The short motif at Asn-270–Ala-272 is the NPA 2 element. The chain crosses the membrane as a helical span at residues Trp-303 to Val-323.

The protein belongs to the MIP/aquaporin (TC 1.A.8) family.

The protein localises to the cell membrane. In terms of biological role, aquaglyceroporin that may modulate the water content and osmolytes during anhydrobiosis. In Milnesium tardigradum (Water bear), this protein is Aquaporin-1.